Consider the following 777-residue polypeptide: Degenerin unc-8 (777 aa).

The Cytoplasmic segment spans residues 1–128 (MSPLLTWNLI…VATSSFFGRY (128 aa)). Residues 129 to 149 (VWAALFMCMLMAFLLQTYWTM) traverse the membrane as a helical segment. The Extracellular portion of the chain corresponds to 150–689 (SEYLQYRTII…KETAGYTLVN (540 aa)). Residues asparagine 274, asparagine 319, asparagine 357, asparagine 411, asparagine 453, asparagine 533, and asparagine 597 are each glycosylated (N-linked (GlcNAc...) asparagine). A helical transmembrane segment spans residues 690 to 710 (LFSDFGGNIGLWIGFSVITFA). Topologically, residues 711 to 777 (EFAELFCEIC…NESTKELMSK (67 aa)) are cytoplasmic. Positions 752–777 (QRSPKKSQPGEDEVSTNESTKELMSK) are disordered.

Belongs to the amiloride-sensitive sodium channel (TC 1.A.6) family.

It localises to the membrane. In terms of biological role, sodium permeable non-voltage-sensitive ion channel. Involved in the activity-dependent removal of selected presynaptic proteins, such as synaptobrevin snb-1, and Ras-related rab-3, in the remodeling of GABAergic motor neurons. This Caenorhabditis elegans protein is Degenerin unc-8.